Here is a 148-residue protein sequence, read N- to C-terminus: SsrA-binding protein (148 aa).

The tract at residues 123-148 (KLHDKRETEKKRDWEREKARIMRSAT) is disordered. Residues 126–142 (DKRETEKKRDWEREKAR) are compositionally biased toward basic and acidic residues.

Belongs to the SmpB family.

The protein localises to the cytoplasm. Functionally, required for rescue of stalled ribosomes mediated by trans-translation. Binds to transfer-messenger RNA (tmRNA), required for stable association of tmRNA with ribosomes. tmRNA and SmpB together mimic tRNA shape, replacing the anticodon stem-loop with SmpB. tmRNA is encoded by the ssrA gene; the 2 termini fold to resemble tRNA(Ala) and it encodes a 'tag peptide', a short internal open reading frame. During trans-translation Ala-aminoacylated tmRNA acts like a tRNA, entering the A-site of stalled ribosomes, displacing the stalled mRNA. The ribosome then switches to translate the ORF on the tmRNA; the nascent peptide is terminated with the 'tag peptide' encoded by the tmRNA and targeted for degradation. The ribosome is freed to recommence translation, which seems to be the essential function of trans-translation. This chain is SsrA-binding protein, found in Burkholderia thailandensis (strain ATCC 700388 / DSM 13276 / CCUG 48851 / CIP 106301 / E264).